The sequence spans 142 residues: Large ribosomal subunit protein uL11 (142 aa).

Belongs to the universal ribosomal protein uL11 family. Part of the ribosomal stalk of the 50S ribosomal subunit. Interacts with L10 and the large rRNA to form the base of the stalk. L10 forms an elongated spine to which L12 dimers bind in a sequential fashion forming a multimeric L10(L12)X complex. One or more lysine residues are methylated.

Forms part of the ribosomal stalk which helps the ribosome interact with GTP-bound translation factors. The polypeptide is Large ribosomal subunit protein uL11 (Rhodopseudomonas palustris (strain BisB18)).